Reading from the N-terminus, the 156-residue chain is Acyl carrier protein, mitochondrial (156 aa).

Residues 1–68 (MAVRVLCACV…GRVTQLCRQY (68 aa)) constitute a mitochondrion transit peptide. In terms of domain architecture, Carrier spans 77–152 (EGIKDRVLYV…EIVDYIADKK (76 aa)). K88 carries the post-translational modification N6-acetyllysine. Residue S112 is modified to O-(pantetheine 4'-phosphoryl)serine.

Mammalian complex I is composed of 45 different subunits. Interacts with ETFRF1. Identified in a complex composed of MALSU1, MIEF1 upstream open reading frame protein and NDUFAB1; within the trimeric complex MIEF1 upstream open reading frame protein functions as a bridging scaffold that interacts with MALSU1 on one side, and with NDUFAB1 on the other side. The complex interacts with the mitochondrial large ribosomal subunit. Interacts with alpha-1-microglobulin chain; this interaction is required for the maintenance of mitochondrial redox homeostasis. Component of the mitochondrial core iron-sulfur cluster (ISC) complex composed of NFS1, LYRM4, NDUFAB1, ISCU, FXN, and FDX2; this complex is a heterohexamer containing two copies of each monomer. Component of the cyteine desulfurase complex composed of NFS1, LYRM4 and NDUFAB1; this complex contributes to the stability and cysteine desulfurase activity of NFS1. In terms of processing, phosphopantetheinylation at Ser-112 is essential for interactions with LYR motif-containing proteins.

The protein resides in the mitochondrion. Carrier of the growing fatty acid chain in fatty acid biosynthesis. Accessory and non-catalytic subunit of the mitochondrial membrane respiratory chain NADH dehydrogenase (Complex I), which functions in the transfer of electrons from NADH to the respiratory chain. Accessory protein, of the core iron-sulfur cluster (ISC) assembly complex, that regulates, in association with LYRM4, the stability and the cysteine desulfurase activity of NFS1 and participates in the [2Fe-2S] clusters assembly on the scaffolding protein ISCU. The core iron-sulfur cluster (ISC) assembly complex is involved in the de novo synthesis of a [2Fe-2S] cluster, the first step of the mitochondrial iron-sulfur protein biogenesis. This process is initiated by the cysteine desulfurase complex (NFS1:LYRM4:NDUFAB1) that produces persulfide which is delivered on the scaffold protein ISCU in a FXN-dependent manner. Then this complex is stabilized by FDX2 which provides reducing equivalents to accomplish the [2Fe-2S] cluster assembly. Finally, the [2Fe-2S] cluster is transferred from ISCU to chaperone proteins, including HSCB, HSPA9 and GLRX5. This chain is Acyl carrier protein, mitochondrial, found in Bos taurus (Bovine).